The chain runs to 145 residues: UPF0763 protein WS1752 (145 aa).

Belongs to the UPF0763 family.

This Wolinella succinogenes (strain ATCC 29543 / DSM 1740 / CCUG 13145 / JCM 31913 / LMG 7466 / NCTC 11488 / FDC 602W) (Vibrio succinogenes) protein is UPF0763 protein WS1752.